The following is a 399-amino-acid chain: Probable endo-xylogalacturonan hydrolase A (399 aa).

The signal sequence occupies residues 1 to 19; it reads MTFGKAAFLSFSLFGASWA. 5 PbH1 repeats span residues 177 to 207, 208 to 229, 231 to 251, 260 to 283, and 293 to 314; these read TTNA…DIGE, STYV…AFKP, CNYL…SVGS, VQNV…KTYP, and VTNV…QIQS. Aspartate 222 serves as the catalytic Proton donor. Histidine 245 is a catalytic residue. 2 N-linked (GlcNAc...) asparagine glycosylation sites follow: asparagine 295 and asparagine 382.

This sequence belongs to the glycosyl hydrolase 28 family.

Its subcellular location is the secreted. Pectinolytic enzyme involved in the degradation of xylogalacturonan (xga), a galacturonan backbone heavily substituted with xylose, and which is one important component of the hairy regions of pectin. Activity requires a galacturonic acid backbone substituted with xylose. The polypeptide is Probable endo-xylogalacturonan hydrolase A (xghA) (Emericella nidulans (strain FGSC A4 / ATCC 38163 / CBS 112.46 / NRRL 194 / M139) (Aspergillus nidulans)).